Consider the following 274-residue polypeptide: Orotidine 5'-phosphate decarboxylase (274 aa).

K95 functions as the Proton donor in the catalytic mechanism.

Belongs to the OMP decarboxylase family. Type 2 subfamily.

The catalysed reaction is orotidine 5'-phosphate + H(+) = UMP + CO2. Its pathway is pyrimidine metabolism; UMP biosynthesis via de novo pathway; UMP from orotate: step 2/2. This chain is Orotidine 5'-phosphate decarboxylase, found in Variovorax paradoxus (strain S110).